We begin with the raw amino-acid sequence, 468 residues long: Glutamate--tRNA ligase 2 (468 aa).

Residues 9–19 (PSPTGHLHIGG) carry the 'HIGH' region motif. Positions 98, 100, 125, and 127 each coordinate Zn(2+). The short motif at 236–240 (RLSKR) is the 'KMSKS' region element. Residue Lys239 participates in ATP binding.

It belongs to the class-I aminoacyl-tRNA synthetase family. Glutamate--tRNA ligase type 1 subfamily. Monomer. The cofactor is Zn(2+).

The protein resides in the cytoplasm. It carries out the reaction tRNA(Glu) + L-glutamate + ATP = L-glutamyl-tRNA(Glu) + AMP + diphosphate. In terms of biological role, catalyzes the attachment of glutamate to tRNA(Glu) in a two-step reaction: glutamate is first activated by ATP to form Glu-AMP and then transferred to the acceptor end of tRNA(Glu). The polypeptide is Glutamate--tRNA ligase 2 (Methylococcus capsulatus (strain ATCC 33009 / NCIMB 11132 / Bath)).